Here is a 1100-residue protein sequence, read N- to C-terminus: Formin-like protein 1 (1100 aa).

A compositionally biased stretch (low complexity) spans 1–13; that stretch reads MGNAAGSAEQPAG. Disordered regions lie at residues 1-31, 167-200, 446-474, and 510-635; these read MGNA…PMPA, STDN…PKSR, RFSE…TRPS, and TPSG…AKKP. Residue glycine 2 is the site of N-myristoyl glycine attachment. Serine 7 is modified (phosphoserine). Residues 14–28 are compositionally biased toward pro residues; sequence PAAPPPKQPAPPKQP. Positions 27-468 constitute a GBD/FH3 domain; the sequence is QPMPAAGELE…PPEPEKAPPA (442 aa). Position 184 is a phosphoserine (serine 184). Low complexity predominate over residues 517–538; that stretch reads PTPGVPTGSPSPDLAPAAEPAP. The segment covering 539 to 615 has biased composition (pro residues); sequence GAAPPPPPPL…PPPPPPPGGP (77 aa). Serine 624 and serine 693 each carry phosphoserine. The 392-residue stretch at 632–1023 folds into the FH2 domain; that stretch reads AKKPIQTKFR…QEAGADTPGK (392 aa). The segment at 1008-1037 is disordered; the sequence is KKEAAAQEAGADTPGKGEPPAPKSPPKARR. Low complexity predominate over residues 1013–1023; that stretch reads AQEAGADTPGK. At serine 1031 the chain carries Phosphoserine. The DAD domain occupies 1059 to 1090; sequence SDRDGAIEDIITVIKTVPFTARTGKRTSRLLC.

This sequence belongs to the formin homology family. Interacts with RAC1, PFN1 and PFN2. Interacts (activated by RAC1) with SRGAP2 (via SH3 domain); regulates the actin filament severing activity of FMNL1. Myristoylation mediates membrane localization and blebbing. As to expression, expressed in heart, brain, placenta, lung, liver, skeletal muscle, kidney and pancreas.

It is found in the cytoplasm. It localises to the cell membrane. The protein resides in the cytoplasmic vesicle. The protein localises to the phagosome. Its subcellular location is the cell cortex. It is found in the cell projection. It localises to the bleb. Its function is as follows. May play a role in the control of cell motility and survival of macrophages. Plays a role in the regulation of cell morphology and cytoskeletal organization. Required in the cortical actin filament dynamics and cell shape. The protein is Formin-like protein 1 (FMNL1) of Homo sapiens (Human).